Reading from the N-terminus, the 708-residue chain is Leucine-rich repeat neuronal protein 3 (708 aa).

Positions 1–22 (MKDMPLQIHVLLGLAITTLVQA) are cleaved as a signal peptide. Residues 23–69 (VDKKVDCPQLCTCEIRPWFTPTSIYMEASTVDCNDLGLLTFPARLPA) enclose the LRRNT domain. Over 23–628 (VDKKVDCPQL…KEYEKSNTTT (606 aa)) the chain is Extracellular. LRR repeat units lie at residues 70–91 (NTQI…TDFP), 93–114 (NLTG…NVKK), 117–138 (QLLS…CLSE), 141–162 (NLQE…AFIG), 165–186 (NLLR…WFDA), 189–210 (NLEI…NFKP), 213–234 (NLRS…ALVG), 237–258 (NLES…ALQK), 261–282 (NLKF…DFSN), 285–304 (HLKE…DSLA), 310–332 (DLRK…AFFR), and 335–358 (KLES…ESLP). Asparagine 93 and asparagine 103 each carry an N-linked (GlcNAc...) asparagine glycan. A glycan (N-linked (GlcNAc...) asparagine) is linked at asparagine 223. Residues 368–421 (NPIRCDCVIRWINMNKTNIRFMEPDSLFCVDPPEFQGQNVRQVHFRDMMEICLP) form the LRRCT domain. A glycan (N-linked (GlcNAc...) asparagine) is linked at asparagine 382. Residues 421-514 (PLIAPESFPS…DLKSVMIKVD (94 aa)) form the Ig-like C2-type domain. Residues cysteine 444 and cysteine 496 are joined by a disulfide bond. Residues asparagine 522, asparagine 579, asparagine 608, and asparagine 625 are each glycosylated (N-linked (GlcNAc...) asparagine). The region spanning 523–617 (GSLNIKIRDI…NVTTKGLDPD (95 aa)) is the Fibronectin type-III domain. The chain crosses the membrane as a helical span at residues 629 to 649 (LMACLGGLLGIIGVICLISCL). The Cytoplasmic segment spans residues 650-708 (SPEMNCDGGHSYVRNYLQKPTFALGELYPPLINLWEAGKEKSTSLKVKATVIGLPTNMS).

It is found in the membrane. This Pongo abelii (Sumatran orangutan) protein is Leucine-rich repeat neuronal protein 3 (LRRN3).